The primary structure comprises 315 residues: Zinc transport protein ZntB (315 aa).

The Cytoplasmic segment spans residues 1–250; it reads MGFMIEHWDF…RDEKTNKNSY (250 aa). A helical membrane pass occupies residues 251-271; that stretch reads LFTLVATIFLPTSFLTGLLGI. The Periplasmic portion of the chain corresponds to 272-282; sequence NIGGMPGVESS. A helical membrane pass occupies residues 283 to 303; it reads MAFTWFCIALIVIFGLEWLLF. At 304-315 the chain is on the cytoplasmic side; the sequence is KRLGFTNKTDDE.

This sequence belongs to the CorA metal ion transporter (MIT) (TC 1.A.35) family. Homopentamer. Can assemble pentamers in the absence of the transmembrane regions.

It localises to the cell inner membrane. It carries out the reaction Zn(2+)(out) + H(+)(out) = Zn(2+)(in) + H(+)(in). Functionally, zinc transporter. Acts as a Zn(2+):proton symporter, which likely mediates zinc ion uptake. The protein is Zinc transport protein ZntB of Vibrio parahaemolyticus serotype O3:K6 (strain RIMD 2210633).